The primary structure comprises 431 residues: Selenocysteine lyase (431 aa).

N6-(pyridoxal phosphate)lysine is present on K239. The active-site S-selanylcysteine intermediate is the C367.

The protein belongs to the class-V pyridoxal-phosphate-dependent aminotransferase family. In terms of assembly, homodimer. Requires pyridoxal 5'-phosphate as cofactor.

The protein resides in the cytoplasm. It localises to the cytosol. The enzyme catalyses L-selenocysteine + AH2 = hydrogenselenide + L-alanine + A + H(+). Functionally, catalyzes the decomposition of L-selenocysteine to L-alanine and elemental selenium. The chain is Selenocysteine lyase (scly) from Xenopus tropicalis (Western clawed frog).